Reading from the N-terminus, the 161-residue chain is Troponin C, slow skeletal and cardiac muscles (161 aa).

Residue Met1 is modified to N-acetylmethionine. 4 EF-hand domains span residues 16–51, 52–87, 92–127, and 128–161; these read QKNE…LGQN, PTPE…CMKD, KSEE…TGET, and ITED…KGVE. Asp65, Asp67, Ser69, Thr71, and Glu76 together coordinate Ca(2+). Position 98 is a phosphoserine (Ser98). Ca(2+) is bound by residues Asp105, Asn107, Asp109, Tyr111, Glu116, Asp141, Asn143, Asp145, Arg147, and Glu152.

The protein belongs to the troponin C family.

Troponin is the central regulatory protein of striated muscle contraction. Tn consists of three components: Tn-I which is the inhibitor of actomyosin ATPase, Tn-T which contains the binding site for tropomyosin and Tn-C. The binding of calcium to Tn-C abolishes the inhibitory action of Tn on actin filaments. The sequence is that of Troponin C, slow skeletal and cardiac muscles (Tnnc1) from Mus musculus (Mouse).